The chain runs to 780 residues: Cation channel sperm-associated protein 1 (780 aa).

Disordered stretches follow at residues 1-37 (MDQN…PGHS), 71-306 (LSSH…QDHH), and 376-412 (QMSK…LQRT). Over 1–447 (MDQNSVPEKA…EMIRNLTQSL (447 aa)) the chain is Cytoplasmic. Over residues 110-122 (SYGEDYHDELQRD) the composition is skewed to basic and acidic residues. The span at 211 to 241 (QVPHRGWPHHHQVHHHGRSRHHEAHQHGKSP) shows a compositional bias: basic residues. Positions 261–284 (SDYHSEYHQGDHHPSEYHHGDHPH) are enriched in basic and acidic residues. Positions 285-299 (HTQHHYHQTHRHRDY) are enriched in basic residues. The span at 387–401 (STKHSEDWGKEEGQF) shows a compositional bias: basic and acidic residues. Positions 402-412 (QKRKTGRLQRT) are enriched in basic residues. Residues 448–469 (AFETFIFFVVCLNTVMLVAQTF) traverse the membrane as a helical segment. Topologically, residues 470–478 (AEVEIRGEW) are extracellular. The chain crosses the membrane as a helical span at residues 479–500 (YFMALDSIFFCIYVVEALLKII). The Cytoplasmic segment spans residues 501-508 (ALGLSYFF). A helical membrane pass occupies residues 509–531 (DFWNNLDFFIMAMAVLDFLLMQT). Over 532 to 540 (HSFAIYHQS) the chain is Extracellular. The chain crosses the membrane as a helical span at residues 541–563 (LFRILKVFKSLRALRAIRVLRRL). Topologically, residues 564 to 581 (SFLTSVQEVTGTLGQSLP) are cytoplasmic. A helical membrane pass occupies residues 582–604 (SIAAILILMFTCLFLFSAVLRAL). The Extracellular segment spans residues 605–615 (FRKSDPKRFQN). The helical; Pore-forming intramembrane region spans 616 to 628 (IFTTIFTLFTLLT). The Extracellular portion of the chain corresponds to 629 to 645 (LDDWSLIYMDSRAQGAW). Residues 646 to 671 (YIIPILVIYIIIQYFIFLNLVITVLV) traverse the membrane as a helical segment. The Cytoplasmic portion of the chain corresponds to 672-780 (DSFQTALFKG…FEAGEEDFRN (109 aa)).

Belongs to the cation channel sperm-associated (TC 1.A.1.19) family. As to quaternary structure, component of the CatSper complex or CatSpermasome composed of the core pore-forming members CATSPER1, CATSPER2, CATSPER3 and CATSPER4 as well as auxiliary members CATSPERB, CATSPERG, CATSPERD, CATSPERE, CATSPERZ, C2CD6/CATSPERT, TMEM249, TMEM262 and EFCAB9. HSPA1 may be an additional auxiliary complex member. The core complex members CATSPER1, CATSPER2, CATSPER3 and CATSPER4 form a heterotetrameric channel. The auxiliary CATSPERB, CATSPERG, CATSPERD and CATSPERE subunits form a pavilion-like structure over the pore which stabilizes the complex through interactions with CATSPER4, CATSPER3, CATSPER1 and CATSPER2 respectively. TMEM262/CATSPERH interacts with CATSPERB, further stabilizing the complex. C2CD6/CATSPERT interacts at least with CATSPERD and is required for targeting the CatSper complex in the flagellar membrane. Interacts with Ca(v)3.3/CACNA1I, leading to suppression of T-type calcium channel activity. Testis-specific.

Its subcellular location is the cell projection. The protein resides in the cilium. It localises to the flagellum membrane. It carries out the reaction Ca(2+)(in) = Ca(2+)(out). With respect to regulation, the CatSper calcium channel is indirectly activated by extracellular progesterone and prostaglandins following the sequence: progesterone &gt; PGF1-alpha = PGE1 &gt; PGA1 &gt; PGE2 &gt;&gt; PGD2. The CatSper calcium channel is directly inhibited by endocannabinoid 2-arachidonoylglycerol (2AG). Indirect activation by progesterone takes place via the following mechanism: progesterone binds and activates the acylglycerol lipase ABHD2, which in turn mediates hydrolysis of 2AG inhibitor, relieving inhibition of the CatSper channel. The primary effect of progesterone activation is to shift voltage dependence towards more physiological, negative membrane potentials; it is not mediated by metabotropic receptors and second messengers. Sperm capacitation enhances the effect of progesterone by providing additional negative shift. Also activated by the elevation of intracellular pH. Its function is as follows. Pore-forming subunit of the CatSper complex, a sperm-specific voltage-gated calcium channel that plays a central role in calcium-dependent physiological responses essential for successful fertilization, such as sperm hyperactivation, acrosome reaction and chemotaxis towards the oocyte. The polypeptide is Cation channel sperm-associated protein 1 (CATSPER1) (Homo sapiens (Human)).